Here is a 66-residue protein sequence, read N- to C-terminus: Large ribosomal subunit protein bL32 (66 aa).

It belongs to the bacterial ribosomal protein bL32 family.

The sequence is that of Large ribosomal subunit protein bL32 from Rickettsia bellii (strain OSU 85-389).